A 107-amino-acid chain; its full sequence is SH3 domain-binding glutamic acid-rich-like protein 2 (107 aa).

Positions 61-67 (QGNPLPP) match the SH3-binding motif.

The protein belongs to the SH3BGR family.

Its subcellular location is the nucleus. The sequence is that of SH3 domain-binding glutamic acid-rich-like protein 2 (SH3BGRL2) from Pongo abelii (Sumatran orangutan).